The chain runs to 126 residues: Protein ApaG (126 aa).

Residues 2–126 enclose the ApaG domain; that stretch reads SALDTSIRVE…FRLATPGLLH (125 aa).

In Shewanella sp. (strain W3-18-1), this protein is Protein ApaG.